The sequence spans 367 residues: Cobalt-precorrin-5B C(1)-methyltransferase (367 aa).

It belongs to the CbiD family.

The enzyme catalyses Co-precorrin-5B + S-adenosyl-L-methionine = Co-precorrin-6A + S-adenosyl-L-homocysteine. It participates in cofactor biosynthesis; adenosylcobalamin biosynthesis; cob(II)yrinate a,c-diamide from sirohydrochlorin (anaerobic route): step 6/10. Its function is as follows. Catalyzes the methylation of C-1 in cobalt-precorrin-5B to form cobalt-precorrin-6A. The chain is Cobalt-precorrin-5B C(1)-methyltransferase from Leptospira interrogans serogroup Icterohaemorrhagiae serovar copenhageni (strain Fiocruz L1-130).